The chain runs to 149 residues: Macrodomain Ter protein (149 aa).

The protein belongs to the MatP family. As to quaternary structure, homodimer.

It localises to the cytoplasm. Required for spatial organization of the terminus region of the chromosome (Ter macrodomain) during the cell cycle. Prevents early segregation of duplicated Ter macrodomains during cell division. Binds specifically to matS, which is a 13 bp signature motif repeated within the Ter macrodomain. This is Macrodomain Ter protein from Vibrio vulnificus (strain CMCP6).